Reading from the N-terminus, the 305-residue chain is NAD kinase 2 (305 aa).

Catalysis depends on Asp-78, which acts as the Proton acceptor. NAD(+) is bound by residues 78–79 (DG), 152–153 (NE), Asp-182, 193–198 (TAYSLS), and Asn-251.

It belongs to the NAD kinase family. A divalent metal cation serves as cofactor.

It localises to the cytoplasm. The catalysed reaction is NAD(+) + ATP = ADP + NADP(+) + H(+). Functionally, involved in the regulation of the intracellular balance of NAD and NADP, and is a key enzyme in the biosynthesis of NADP. Catalyzes specifically the phosphorylation on 2'-hydroxyl of the adenosine moiety of NAD to yield NADP. This Trichormus variabilis (strain ATCC 29413 / PCC 7937) (Anabaena variabilis) protein is NAD kinase 2.